Consider the following 173-residue polypeptide: Putative metal-dependent hydrolase BCE_2729 (173 aa).

Positions 65, 156, and 160 each coordinate Zn(2+).

The protein belongs to the metal hydrolase YfiT family. In terms of assembly, homodimer. Zn(2+) serves as cofactor.

It localises to the cytoplasm. Possible metal-dependent hydrolase. The chain is Putative metal-dependent hydrolase BCE_2729 from Bacillus cereus (strain ATCC 10987 / NRS 248).